The primary structure comprises 76 residues: Exodeoxyribonuclease 7 small subunit (76 aa).

It belongs to the XseB family. As to quaternary structure, heterooligomer composed of large and small subunits.

It is found in the cytoplasm. It carries out the reaction Exonucleolytic cleavage in either 5'- to 3'- or 3'- to 5'-direction to yield nucleoside 5'-phosphates.. In terms of biological role, bidirectionally degrades single-stranded DNA into large acid-insoluble oligonucleotides, which are then degraded further into small acid-soluble oligonucleotides. This Legionella pneumophila (strain Paris) protein is Exodeoxyribonuclease 7 small subunit.